The following is a 383-amino-acid chain: S-adenosylmethionine synthase (383 aa).

ATP is bound at residue histidine 15. Aspartate 17 is a binding site for Mg(2+). Position 43 (glutamate 43) interacts with K(+). 2 residues coordinate L-methionine: glutamate 56 and glutamine 99. A flexible loop region spans residues 99 to 109 (QSPDINQGVDR). Residues 164 to 166 (DAK), 230 to 231 (RF), aspartate 239, 245 to 246 (RK), alanine 262, and lysine 266 contribute to the ATP site. Position 239 (aspartate 239) interacts with L-methionine. Lysine 270 provides a ligand contact to L-methionine.

Belongs to the AdoMet synthase family. As to quaternary structure, homotetramer; dimer of dimers. The cofactor is Mg(2+). K(+) serves as cofactor.

It localises to the cytoplasm. It carries out the reaction L-methionine + ATP + H2O = S-adenosyl-L-methionine + phosphate + diphosphate. It functions in the pathway amino-acid biosynthesis; S-adenosyl-L-methionine biosynthesis; S-adenosyl-L-methionine from L-methionine: step 1/1. Its function is as follows. Catalyzes the formation of S-adenosylmethionine (AdoMet) from methionine and ATP. The overall synthetic reaction is composed of two sequential steps, AdoMet formation and the subsequent tripolyphosphate hydrolysis which occurs prior to release of AdoMet from the enzyme. The chain is S-adenosylmethionine synthase from Shewanella oneidensis (strain ATCC 700550 / JCM 31522 / CIP 106686 / LMG 19005 / NCIMB 14063 / MR-1).